We begin with the raw amino-acid sequence, 436 residues long: MSTNLVDYVDDSYLNQSMNSENGLDSVTQIMYDMKKYNIVNDVLPPPNHEDLHVVIMAVSYLLLFLLGTCGNVAVLTTIYHVIRSSRATLDNTLIYVIVLSCVDFGVCLSLPITVIDQILGFWMFGKIPCKLHAVFENFGKILSALILTAMSFDRYAGVCHPQRKRLRSRNFAITILLVLAVYAFITLCPLLWSFTAREIILYAKETAPGMLTRMKIEKCTVDIDSQMFTAFTIYQFILCYCTPLVLIAFFYTKLLSKLREHTRTFKSSQIPFLHISLYTLAVACFYFLCWTPFWMATLFAVYLENSANSSSVPPVFVYIMYFIHALPFTNSAINWILYGALNGQLQQRYRSNRSNSTKKTTTTTASTALLEKKITNLNTNSNYQVNGSMNSIATAAPTKTIGNNEVLVATSTIDDDVATDVVDVRLLSNHNPTFL.

Topologically, residues 1-53 are extracellular; sequence MSTNLVDYVDDSYLNQSMNSENGLDSVTQIMYDMKKYNIVNDVLPPPNHEDLH. Asn-15 carries N-linked (GlcNAc...) asparagine glycosylation. Residues 54-74 traverse the membrane as a helical segment; it reads VVIMAVSYLLLFLLGTCGNVA. Residues 75–94 are Cytoplasmic-facing; the sequence is VLTTIYHVIRSSRATLDNTL. A helical membrane pass occupies residues 95 to 115; the sequence is IYVIVLSCVDFGVCLSLPITV. At 116-132 the chain is on the extracellular side; it reads IDQILGFWMFGKIPCKL. Residues 133–153 traverse the membrane as a helical segment; the sequence is HAVFENFGKILSALILTAMSF. Residues 154 to 171 are Cytoplasmic-facing; that stretch reads DRYAGVCHPQRKRLRSRN. The chain crosses the membrane as a helical span at residues 172-192; sequence FAITILLVLAVYAFITLCPLL. The Extracellular portion of the chain corresponds to 193–230; it reads WSFTAREIILYAKETAPGMLTRMKIEKCTVDIDSQMFT. Residues 231–251 traverse the membrane as a helical segment; that stretch reads AFTIYQFILCYCTPLVLIAFF. Residues 252 to 281 are Cytoplasmic-facing; it reads YTKLLSKLREHTRTFKSSQIPFLHISLYTL. The helical transmembrane segment at 282–302 threads the bilayer; sequence AVACFYFLCWTPFWMATLFAV. At 303–316 the chain is on the extracellular side; the sequence is YLENSANSSSVPPV. Asn-309 carries N-linked (GlcNAc...) asparagine glycosylation. The chain crosses the membrane as a helical span at residues 317–337; the sequence is FVYIMYFIHALPFTNSAINWI. Residues 338-436 are Cytoplasmic-facing; sequence LYGALNGQLQ…LLSNHNPTFL (99 aa).

This sequence belongs to the G-protein coupled receptor 1 family.

It is found in the cell membrane. Its function is as follows. Putative receptor. The sequence is that of Probable G-protein coupled receptor C06G4.5 from Caenorhabditis elegans.